The primary structure comprises 449 residues: Exodeoxyribonuclease 7 large subunit (449 aa).

The protein belongs to the XseA family. In terms of assembly, heterooligomer composed of large and small subunits.

It localises to the cytoplasm. It carries out the reaction Exonucleolytic cleavage in either 5'- to 3'- or 3'- to 5'-direction to yield nucleoside 5'-phosphates.. Bidirectionally degrades single-stranded DNA into large acid-insoluble oligonucleotides, which are then degraded further into small acid-soluble oligonucleotides. The chain is Exodeoxyribonuclease 7 large subunit from Salmonella typhimurium (strain LT2 / SGSC1412 / ATCC 700720).